Here is a 133-residue protein sequence, read N- to C-terminus: UPF0225 protein BB3385 (133 aa).

The protein belongs to the UPF0225 family.

The polypeptide is UPF0225 protein BB3385 (Bordetella bronchiseptica (strain ATCC BAA-588 / NCTC 13252 / RB50) (Alcaligenes bronchisepticus)).